Reading from the N-terminus, the 182-residue chain is Cbp/p300-interacting transactivator 4 (182 aa).

Residues 22 to 129 (GPHAPRTLQP…PPPPPPALGC (108 aa)) are disordered. Residues 64-89 (SPVSFQPFPVSQSPGAGSTHLQSAAT) show a composition bias toward polar residues. Residues 100 to 117 (AAAGGPSPLQPAPGAAAS) are compositionally biased toward low complexity.

This sequence belongs to the CITED family. In terms of assembly, interacts via its C-terminal region with the CH1 domain of CREBBP and EP300. Interacts with all TFAP2/AP-2 isoforms. As to expression, strongly expressed in heart, spleen and testis, and weakly in liver and kidney.

The protein localises to the nucleus. Its subcellular location is the cytoplasm. Acts as a transcriptional coactivator for TFAP2/AP-2. Enhances estrogen-dependent transactivation mediated by estrogen receptors. May function as an inhibitor of transactivation by HIF1A by disrupting HIF1A interaction with CREBBP. May be involved in regulation of gene expression during development and differentiation of blood cells, endothelial cells and mammary epithelial cells. The polypeptide is Cbp/p300-interacting transactivator 4 (Mus musculus (Mouse)).